Here is a 197-residue protein sequence, read N- to C-terminus: Probable nicotinate-nucleotide adenylyltransferase (197 aa).

Belongs to the NadD family.

It carries out the reaction nicotinate beta-D-ribonucleotide + ATP + H(+) = deamido-NAD(+) + diphosphate. Its pathway is cofactor biosynthesis; NAD(+) biosynthesis; deamido-NAD(+) from nicotinate D-ribonucleotide: step 1/1. In terms of biological role, catalyzes the reversible adenylation of nicotinate mononucleotide (NaMN) to nicotinic acid adenine dinucleotide (NaAD). This is Probable nicotinate-nucleotide adenylyltransferase from Bordetella parapertussis (strain 12822 / ATCC BAA-587 / NCTC 13253).